The primary structure comprises 253 residues: tRNA uridine(34) hydroxylase (253 aa).

One can recognise a Rhodanese domain in the interval histidine 127 to tyrosine 221. Cysteine 181 serves as the catalytic Cysteine persulfide intermediate.

It belongs to the TrhO family.

It carries out the reaction uridine(34) in tRNA + AH2 + O2 = 5-hydroxyuridine(34) in tRNA + A + H2O. Catalyzes oxygen-dependent 5-hydroxyuridine (ho5U) modification at position 34 in tRNAs. The polypeptide is tRNA uridine(34) hydroxylase (Xanthomonas campestris pv. campestris (strain B100)).